A 524-amino-acid chain; its full sequence is Beta-glucosidase 22 (524 aa).

A signal peptide spans Met-1–Ala-24. Gln-55 is an a beta-D-glucoside binding site. An N-linked (GlcNAc...) asparagine glycan is attached at Asn-61. A beta-D-glucoside is bound by residues His-158 and Asn-203 to Glu-204. The active-site Proton donor is Glu-204. A disulfide bridge links Cys-223 with Cys-230. A beta-D-glucoside is bound by residues Tyr-346, Glu-418, Trp-468, Glu-475–Trp-476, and Phe-484. Residue Glu-418 is the Nucleophile of the active site. Asn-494 is a glycosylation site (N-linked (GlcNAc...) asparagine). Residues Lys-521 to Leu-524 carry the Prevents secretion from ER motif.

This sequence belongs to the glycosyl hydrolase 1 family. In terms of assembly, component of the PYK10 complex, at least composed of PYK10/BGLU23, BGLU21, BGLU22, JAL22, JAL23, PBP1/JAL30, PBP2/JAL31, JAL32, JAL33, JAL34, JAL35, GLL22 and GLL23. In terms of tissue distribution, expressed exclusively in roots.

It localises to the endoplasmic reticulum lumen. The enzyme catalyses Hydrolysis of terminal, non-reducing beta-D-glucosyl residues with release of beta-D-glucose.. Its activity is regulated as follows. Activated upon binding to PBP1 or PBP2. In terms of biological role, beta-D-glucosidase active on scopolin &gt;&gt; esculin &gt;&gt; 4-MU-glucoside. No activity with DIMBOA-glucoside, pNP-glucoside, oNP-glucoside and sinigrin as substrates. In Arabidopsis thaliana (Mouse-ear cress), this protein is Beta-glucosidase 22.